Here is a 70-residue protein sequence, read N- to C-terminus: VIIIAVLFLTACQLTTAETSSRGKQKHRALRSTDKNSKLTRGCTPPGGACGGHAHCCSQSCDILASTCNA.

Residues 1–17 form the signal peptide; that stretch reads VIIIAVLFLTACQLTTA. The propeptide occupies 18-41; it reads ETSSRGKQKHRALRSTDKNSKLTR. The segment at 20 to 41 is disordered; that stretch reads SSRGKQKHRALRSTDKNSKLTR. Cystine bridges form between Cys-43-Cys-57, Cys-50-Cys-61, and Cys-56-Cys-68.

The protein belongs to the conotoxin O1 superfamily. As to expression, expressed by the venom duct.

It is found in the secreted. This is Conotoxin AbVIB from Conus abbreviatus (Abbreviated cone).